The primary structure comprises 118 residues: Evasin P1080 (118 aa).

The first 19 residues, 1–19 (FFQLAVFVVILFNINLLSA), serve as a signal peptide directing secretion. 3 cysteine pairs are disulfide-bonded: cysteine 41-cysteine 60, cysteine 45-cysteine 62, and cysteine 56-cysteine 73. Asparagine 44 carries an N-linked (GlcNAc...) asparagine glycan. Residues asparagine 67 and asparagine 104 are each glycosylated (N-linked (GlcNAc...) asparagine).

The protein localises to the secreted. Functionally, salivary chemokine-binding protein which binds to host chemokines CXCL1, CXCL2, CXCL3, CXCL4, CXCL5, CXCL6, CXCL10, CXCL11 and CXCL13. This is Evasin P1080 from Ixodes ricinus (Common tick).